The primary structure comprises 278 residues: Hydroxyethylthiazole kinase (278 aa).

Residue methionine 46 participates in substrate binding. 2 residues coordinate ATP: arginine 122 and threonine 168. Residue glycine 195 participates in substrate binding.

Belongs to the Thz kinase family. Mg(2+) serves as cofactor.

The catalysed reaction is 5-(2-hydroxyethyl)-4-methylthiazole + ATP = 4-methyl-5-(2-phosphooxyethyl)-thiazole + ADP + H(+). It functions in the pathway cofactor biosynthesis; thiamine diphosphate biosynthesis; 4-methyl-5-(2-phosphoethyl)-thiazole from 5-(2-hydroxyethyl)-4-methylthiazole: step 1/1. In terms of biological role, catalyzes the phosphorylation of the hydroxyl group of 4-methyl-5-beta-hydroxyethylthiazole (THZ). The chain is Hydroxyethylthiazole kinase from Chloroflexus aggregans (strain MD-66 / DSM 9485).